A 346-amino-acid chain; its full sequence is [LysW]-lysine/[LysW]-ornithine hydrolase (346 aa).

A Zn(2+)-binding site is contributed by H68. D70 is a catalytic residue. Position 92 (D92) interacts with Zn(2+). E122 serves as the catalytic Proton acceptor. Zn(2+)-binding residues include E123, E146, and H317.

Belongs to the peptidase M20A family. LysK subfamily. Requires Zn(2+) as cofactor. The cofactor is Co(2+).

The protein resides in the cytoplasm. The catalysed reaction is [amino-group carrier protein]-C-terminal-gamma-(L-lysyl)-L-glutamate + H2O = [amino-group carrier protein]-C-terminal-L-glutamate + L-lysine. It carries out the reaction [amino-group carrier protein]-C-terminal-gamma-(L-ornithyl)-L-glutamate + H2O = [amino-group carrier protein]-C-terminal-L-glutamate + L-ornithine. Its pathway is amino-acid biosynthesis; L-lysine biosynthesis via AAA pathway; L-lysine from L-alpha-aminoadipate (Thermus route): step 5/5. The protein operates within amino-acid biosynthesis; L-arginine biosynthesis. Catalyzes the release of L-lysine from [LysW]-gamma-L-lysine and the release of L-ornithine from [LysW]-L-ornithine. This is [LysW]-lysine/[LysW]-ornithine hydrolase from Saccharolobus islandicus (strain M.16.4 / Kamchatka #3) (Sulfolobus islandicus).